The chain runs to 648 residues: Macrolide export ATP-binding/permease protein MacB (648 aa).

The 239-residue stretch at 5–243 (LELKDIRRSY…AGGTEPVVNT (239 aa)) folds into the ABC transporter domain. ATP is bound at residue 41–48 (GASGSGKS). The next 4 helical transmembrane spans lie at 273-293 (LLTM…VVVG), 523-543 (LFMT…VMNI), 576-596 (AVLV…LIAF), and 611-631 (PLAL…FGWL).

This sequence belongs to the ABC transporter superfamily. Macrolide exporter (TC 3.A.1.122) family. Homodimer. Part of the tripartite efflux system MacAB-TolC, which is composed of an inner membrane transporter, MacB, a periplasmic membrane fusion protein, MacA, and an outer membrane component, TolC. The complex forms a large protein conduit and can translocate molecules across both the inner and outer membranes. Interacts with MacA.

The protein resides in the cell inner membrane. Part of the tripartite efflux system MacAB-TolC. MacB is a non-canonical ABC transporter that contains transmembrane domains (TMD), which form a pore in the inner membrane, and an ATP-binding domain (NBD), which is responsible for energy generation. Confers resistance against macrolides. The protein is Macrolide export ATP-binding/permease protein MacB of Escherichia coli O157:H7.